The primary structure comprises 857 residues: MLTKRFYNLAIMQDISNHTPMIQQYLKIKSQYQDILLFYRMGDFYELFFDDAKKAAELLDITLTARGKSNGESIPMAGVPYHAAEAYIAKIVKKGLSIAICEQTGDPNTSKGPVERQVTRIITPATVSEEAFLDNNQDSILVSIFEKNNKYYLAYTSYTQGKIYLVKTLTSLNELKNTVLKLSPQEIITNSRELAQQNPFKKPIKALEEWYYSNFEAKKYINDSLDTNIANNILNLYKNDQLTTIGSILSYLTNILKDTPRHITDISYEQEQDTLNIDINSRINLELDNNSKSSLLSIIGKCKTSLGSRLLKRYFSNPTRNLNILATRHSIINSLGENQHFLKIQDVLSYISDIERIISRVALGTVKPKDLVALRDSLEQLPILKKLLSEKNTPEITNINNRIHQLDELVTLLDKAIIENPPTTIRDGGVIKEGFDKELDELKSIKDNSYDFLIKFEELQKQKTGISTLKVGYNSVHGYYIELSKQHADKIPTEYVRRQTLKASERYITEELKNFEDKVLSSKEKALAREKLIYDTLLKKVIEYYKQIQETAASIAEIDVLANFAERAIKLKLSQPKFNNLAKLELKEVRHLAIEHNIDEPFIPNDTLLSKDTNTLQIITGPNMGGKSTYMRQVAQLIFLAYIGSFVPASYADICDIDTIYTRIGASDDISSGRSTFMVEMTETAYILNNASAKSLVIMDEIGRGTSTFDGLALAKACAEKFAQIGAFTLFATHYFELTELAKQYPNVCNIHFEAKEYKDNIYFMHKAVTGAAKKSYGIQVAKLAGISQDVLESAKQNLYNLEKKQQLTESTQVQAQFQLEPTTQNPLQQKLDAIDINTITPLEALNILFELKKTLI.

621-628 (GPNMGGKS) lines the ATP pocket.

This sequence belongs to the DNA mismatch repair MutS family.

This protein is involved in the repair of mismatches in DNA. It is possible that it carries out the mismatch recognition step. This protein has a weak ATPase activity. The polypeptide is DNA mismatch repair protein MutS (Francisella tularensis subsp. tularensis (strain SCHU S4 / Schu 4)).